Here is a 613-residue protein sequence, read N- to C-terminus: Replication protein E1 (613 aa).

The tract at residues 1–31 (MDPNLKGITGQSFLDDQAECSESDNSEQGCE) is disordered. A compositionally biased stretch (acidic residues) spans 16 to 31 (DQAECSESDNSEQGCE). Positions 71 to 73 (KRK) match the Nuclear localization signal motif. Phosphoserine; by host is present on residues S77 and S92. The interval 128–152 (YGSLASQSLSGQSQKNGKNRVNNGN) is disordered. Positions 129-152 (GSLASQSLSGQSQKNGKNRVNNGN) are enriched in low complexity. The DNA-binding region stretch occupies residues 150–317 (NGNKENIDCT…TSITHQIQED (168 aa)). The 154-residue stretch at 413–566 (YQNINFLSFL…FPLDENGKPA (154 aa)) folds into the SF3 helicase domain. 442–449 (GPPNTGKS) provides a ligand contact to ATP. Positions 588–597 (TEPEDEDDGD) are enriched in acidic residues. A disordered region spans residues 588–613 (TEPEDEDDGDPPSPFRCSARAAARDL).

The protein belongs to the papillomaviridae E1 protein family. Can form hexamers. Interacts with E2 protein; this interaction increases E1 DNA binding specificity. Interacts with host DNA polymerase subunit POLA2. Interacts with host single stranded DNA-binding protein RPA1. Interacts with host TOP1; this interaction stimulates the enzymatic activity of TOP1. Post-translationally, phosphorylated.

Its subcellular location is the host nucleus. It carries out the reaction Couples ATP hydrolysis with the unwinding of duplex DNA by translocating in the 3'-5' direction.. The catalysed reaction is ATP + H2O = ADP + phosphate + H(+). In terms of biological role, ATP-dependent DNA 3'-5' helicase required for initiation of viral DNA replication. It forms a complex with the viral E2 protein. The E1-E2 complex binds to the replication origin which contains binding sites for both proteins. During the initial step, a dimer of E1 interacts with a dimer of protein E2 leading to a complex that binds the viral origin of replication with high specificity. Then, a second dimer of E1 displaces the E2 dimer in an ATP-dependent manner to form the E1 tetramer. Following this, two E1 monomers are added to each half of the site, which results in the formation of two E1 trimers on the viral ori. Subsequently, two hexamers will be created. The double hexamer acts as a bi-directional helicase machinery and unwinds the viral DNA and then recruits the host DNA polymerase to start replication. The protein is Replication protein E1 of Bos taurus (Bovine).